Reading from the N-terminus, the 477-residue chain is NADH-quinone oxidoreductase subunit N (477 aa).

A run of 13 helical transmembrane segments spans residues 7–27 (VLAH…LILI), 37–57 (GPMT…LVLG), 77–97 (FMKV…QTYL), 109–129 (ILIL…GLIA), 162–182 (FVLG…IYGF), 201–221 (LGVV…MSTV), 233–253 (GAPT…AIAI), 272–292 (IIVF…IGQT), 297–317 (LMAY…AAGT), 323–343 (GVLA…AAIL), 369–389 (AFFL…AGFF), 402–424 (HLYP…YLRI), and 446–466 (AVLI…GSFV).

This sequence belongs to the complex I subunit 2 family. As to quaternary structure, NDH-1 is composed of 14 different subunits. Subunits NuoA, H, J, K, L, M, N constitute the membrane sector of the complex.

It is found in the cell inner membrane. The enzyme catalyses a quinone + NADH + 5 H(+)(in) = a quinol + NAD(+) + 4 H(+)(out). NDH-1 shuttles electrons from NADH, via FMN and iron-sulfur (Fe-S) centers, to quinones in the respiratory chain. The immediate electron acceptor for the enzyme in this species is believed to be ubiquinone. Couples the redox reaction to proton translocation (for every two electrons transferred, four hydrogen ions are translocated across the cytoplasmic membrane), and thus conserves the redox energy in a proton gradient. The sequence is that of NADH-quinone oxidoreductase subunit N from Beijerinckia indica subsp. indica (strain ATCC 9039 / DSM 1715 / NCIMB 8712).